A 221-amino-acid polypeptide reads, in one-letter code: PKHD-type hydroxylase NATL1_16191 (221 aa).

The Fe2OG dioxygenase domain maps to 80–174 (LIHGVMFTQS…RHVCVGWIQS (95 aa)). Fe cation-binding residues include His98, Asp100, and His155. Residue Arg165 coordinates 2-oxoglutarate.

It depends on Fe(2+) as a cofactor. L-ascorbate serves as cofactor.

The sequence is that of PKHD-type hydroxylase NATL1_16191 from Prochlorococcus marinus (strain NATL1A).